Reading from the N-terminus, the 1224-residue chain is MLTKFETKSARVKGLSFHPKRPWILTSLHNGVIQLWDYRMCTLIDKFDEHDGPVRGIDFHKQQPLFVSGGDDYKIKVWNYKLRRCLFTLLGHLDYIRTTFFHHEYPWILSASDDQTIRVWNWQSRTCVCVLTGHNHYVMCAQFHPTEDLVVSASLDQTVRVWDISGLRKKNLSPGAVESDVRGITGVDLFGTTDAVVKHVLEGHDRGVNWAAFHPTMPLIVSGADDRQVKIWRMNESKAWEVDTCRGHYNNVSCAVFHPRQELILSNSEDKSIRVWDMSKRTGVQTFRRDHDRFWVLAAHPNLNLFAAGHDGGMIVFKLERERPAYAVHGNMLHYVKDRFLRQLDFNSSKDVAVMQLRSGSKFPVFNMSYNPAENAVLLCTRASNLENSTYDLYTIPKDADSQNPDAPEGKRSSGLTAVWVARNRFAVLDRMHSLLIKNLKNEITKKVQVPNCDEIFYAGTGNLLLRDADSITLFDVQQKRTLASVKISKVKYVIWSADMSHVALLAKHAIVICNRKLDALCNIHENIRVKSGAWDESGVFIYTTSNHIKYAVTTGDHGIIRTLDLPIYVTRVKGNNVYCLDRECRPRVLTIDPTEFKFKLALINRKYDEVLHMVRNAKLVGQSIIAYLQKKGYPEVALHFVKDEKTRFSLALECGNIEIALEAAKALDDKNCWEKLGEVALLQGNHQIVEMCYQRTKNFDKLSFLYLITGNLEKLRKMMKIAEIRKDMSGHYQNALYLGDVSERVRILKNCGQKSLAYLTAATHGLDEEAESLKETFDPEKETIPDIDPNAKLLQPPAPIMPLDTNWPLLTVSKGFFEGTIASKGKGGALAADIDIDTVGTEGWGEDAELQLDEDGFVEATEGLGDDALGKGQEEGGGWDVEEDLELPPELDISPGAAGGAEDGFFVPPTKGTSPTQIWCNNSQLPVDHILAGSFETAMRLLHDQVGVIQFGPYKQLFLQTYARGRTTYQALPCLPSMYGYPNRNWKDAGLKNGVPAVGLKLNDLIQRLQLCYQLTTVGKFEEAVEKFRSILLSVPLLVVDNKQEIAEAQQLITICREYIVGLSVETERKKLPKETLEQQKRICEMAAYFTHSNLQPVHMILVLRTALNLFFKLKNFKTAATFARRLLELGPKPEVAQQTRKILSACEKNPTDAYQLNYDMHNPFDICAASYRPIYRGKPVEKCPLSGACYSPEFKGQICRVTTVTEIGKDVIGLRISPLQFR.

4 WD repeats span residues 3–38, 42–80, 84–122, and 126–164; these read TKFE…LWDY, TLID…VWNY, RCLF…VWNW, and TCVC…VWDI. Serine 173 carries the phosphoserine modification. A Phosphothreonine modification is found at threonine 185. 3 WD repeats span residues 195–234, 241–278, and 282–319; these read AVVK…IWRM, EVDT…VWDM, and TGVQ…VFKL. Serine 402 bears the Phosphoserine mark. Position 591 is a phosphothreonine (threonine 591). Serine 895 carries the phosphoserine modification. Arginine 965 bears the Omega-N-methylarginine mark. The residue at position 1193 (serine 1193) is a Phosphoserine.

As to quaternary structure, oligomeric complex that consists of at least the alpha, beta, beta', gamma, delta, epsilon and zeta subunits. Interacts with SCYL1. Interacts with JAGN1. Interacts with TMEM41B. Interacts with SVEP1. Probably interacts with PEX11A. As to expression, uniformly expressed in a wide range of adult and fetal tissues. Xenin is found in gastric, duodenal and jejunal mucosa. Circulates in the blood. Seems to be confined to specific endocrine cells.

It is found in the cytoplasm. It localises to the golgi apparatus membrane. The protein resides in the cytoplasmic vesicle. Its subcellular location is the COPI-coated vesicle membrane. The protein localises to the secreted. In terms of biological role, the coatomer is a cytosolic protein complex that binds to dilysine motifs and reversibly associates with Golgi non-clathrin-coated vesicles, which further mediate biosynthetic protein transport from the ER, via the Golgi up to the trans Golgi network. Coatomer complex is required for budding from Golgi membranes, and is essential for the retrograde Golgi-to-ER transport of dilysine-tagged proteins. In mammals, the coatomer can only be recruited by membranes associated to ADP-ribosylation factors (ARFs), which are small GTP-binding proteins; the complex also influences the Golgi structural integrity, as well as the processing, activity, and endocytic recycling of LDL receptors. Its function is as follows. Xenin stimulates exocrine pancreatic secretion. It inhibits pentagastrin-stimulated secretion of acid, to induce exocrine pancreatic secretion and to affect small and large intestinal motility. In the gut, xenin interacts with the neurotensin receptor. The protein is Coatomer subunit alpha (COPA) of Homo sapiens (Human).